Here is a 161-residue protein sequence, read N- to C-terminus: Cyclic pyranopterin monophosphate synthase (161 aa).

Residues Met-75 to His-77 and Met-115 to Glu-116 contribute to the substrate site. Residue Asp-130 is part of the active site.

It belongs to the MoaC family. Homohexamer; trimer of dimers.

The catalysed reaction is (8S)-3',8-cyclo-7,8-dihydroguanosine 5'-triphosphate = cyclic pyranopterin phosphate + diphosphate. The protein operates within cofactor biosynthesis; molybdopterin biosynthesis. Its function is as follows. Catalyzes the conversion of (8S)-3',8-cyclo-7,8-dihydroguanosine 5'-triphosphate to cyclic pyranopterin monophosphate (cPMP). This is Cyclic pyranopterin monophosphate synthase from Bacillus cereus (strain G9842).